Here is a 118-residue protein sequence, read N- to C-terminus: Actin depolymerizing factor ADF (118 aa).

Residues 4 to 118 (GMGVDENCVA…HEMGDLAPLA (115 aa)) form the ADF-H domain.

The protein belongs to the actin-binding proteins ADF family. Interacts with ACT1 (G-actin); the interaction results in inhibition of actin polymerization. Interacts with DPA; the interaction enhances ADF activity in disassembly of filamentous actin and inhibition of actin polymerization.

Its subcellular location is the cytoplasm. Inhibits actin polymerization. Promotes actin depolymerization. Strongly sequesters actin monomers (G-actin). Weakly severs actin filaments (F-actin). The sequence is that of Actin depolymerizing factor ADF from Toxoplasma gondii.